We begin with the raw amino-acid sequence, 155 residues long: WPP domain-containing protein 1 (155 aa).

Disordered regions lie at residues 1 to 41 (MAET…VTIS) and 124 to 155 (SVKA…SSEA). Residues 7 to 39 (ESITTSSPPPISETENSTTLPTTETEKNPNPVT) show a composition bias toward low complexity. The WPP stretch occupies residues 28-131 (TTETEKNPNP…LESVKAKSNV (104 aa)). Basic and acidic residues predominate over residues 146–155 (VDSKIDSSEA).

Binds to FPP proteins. Interacts with WAP, WIP1, WIP2 and WIP3 through its WPP domain. Interacts with HSP70-1, HSP70-3 and WIT1. Component of a ternary complex composed of WPP1, HSP70-1 and WIT1. Expressed in roots, stems and leaves.

It localises to the nucleus envelope. Its subcellular location is the cytoplasm. The protein resides in the nucleus. It is found in the golgi apparatus. The protein localises to the nucleus matrix. Regulates the mitotic activity in roots. Plays a role with HSP70-1 in facilitating WIT1 nuclear envelope targeting. The chain is WPP domain-containing protein 1 (WPP1) from Arabidopsis thaliana (Mouse-ear cress).